Here is a 164-residue protein sequence, read N- to C-terminus: UPF0305 protein MJ0646 (164 aa).

Belongs to the UPF0305 family.

The sequence is that of UPF0305 protein MJ0646 from Methanocaldococcus jannaschii (strain ATCC 43067 / DSM 2661 / JAL-1 / JCM 10045 / NBRC 100440) (Methanococcus jannaschii).